The primary structure comprises 626 residues: Alpha terpineol synthase, chloroplastic (626 aa).

A chloroplast-targeting transit peptide spans 1 to 38; sequence MALLSVAPLASKSRLHKTLITSAHHLKPSPTTIPTLPV. Mg(2+) is bound by residues Asp377, Asp381, and Asp529. The DDXXD motif signature appears at 377 to 381; the sequence is DDIYD.

Belongs to the terpene synthase family. Tpsd subfamily. Requires Mg(2+) as cofactor. The cofactor is Mn(2+).

The protein resides in the plastid. The protein localises to the chloroplast. It carries out the reaction (2E)-geranyl diphosphate + H2O = (S)-alpha-terpineol + diphosphate. The enzyme catalyses (2E)-geranyl diphosphate + H2O = (R)-alpha-terpineol + diphosphate. It catalyses the reaction (2E)-geranyl diphosphate + H2O = (2E)-geraniol + diphosphate. The catalysed reaction is (2E)-geranyl diphosphate = terpinolene + diphosphate. It carries out the reaction (2E)-geranyl diphosphate = (4S)-limonene + diphosphate. It participates in terpene metabolism; oleoresin biosynthesis. Its pathway is secondary metabolite biosynthesis; terpenoid biosynthesis. In terms of biological role, monoterpene synthase (TPS) involved in the biosynthesis of monoterpene natural products included in conifer oleoresin secretions and volatile emissions; these compounds contribute to biotic and abiotic stress defense against herbivores and pathogens. Catalyzes the conversion of (2E)-geranyl diphosphate (GPP) to (-)-alpha-terpineol, (+)-alpha-terpineol and terpin-4-ol, and, to a lower extent, to geraniol, terpinolene and (-)-limonene. The sequence is that of Alpha terpineol synthase, chloroplastic from Pinus banksiana (Jack pine).